Consider the following 312-residue polypeptide: Malate dehydrogenase (312 aa).

Residues 7–13 (GAAGGIG) and Asp-34 contribute to the NAD(+) site. Arg-81 and Arg-87 together coordinate substrate. Residues Asn-94 and 117 to 119 (ITN) each bind NAD(+). The substrate site is built by Asn-119 and Arg-153. Residue His-177 is the Proton acceptor of the active site. Residue Met-227 coordinates NAD(+).

This sequence belongs to the LDH/MDH superfamily. MDH type 1 family. As to quaternary structure, homodimer.

It carries out the reaction (S)-malate + NAD(+) = oxaloacetate + NADH + H(+). In terms of biological role, catalyzes the reversible oxidation of malate to oxaloacetate. The sequence is that of Malate dehydrogenase from Pectobacterium carotovorum subsp. carotovorum (strain PC1).